Here is a 128-residue protein sequence, read N- to C-terminus: uncharacterized protein (128 aa).

Residues 1–28 (MDADDFGKKDLENGNESPKKPIFMKDWK) are compositionally biased toward basic and acidic residues. The disordered stretch occupies residues 1–30 (MDADDFGKKDLENGNESPKKPIFMKDWKNS).

The protein localises to the cytoplasm. It is found in the nucleus. This is an uncharacterized protein from Schizosaccharomyces pombe (strain 972 / ATCC 24843) (Fission yeast).